The sequence spans 146 residues: Phosphoribosyl-AMP cyclohydrolase (146 aa).

Aspartate 95 lines the Mg(2+) pocket. A Zn(2+)-binding site is contributed by cysteine 96. 2 residues coordinate Mg(2+): aspartate 97 and aspartate 99. Zn(2+) is bound by residues cysteine 112 and cysteine 119.

The protein belongs to the PRA-CH family. As to quaternary structure, homodimer. Mg(2+) serves as cofactor. It depends on Zn(2+) as a cofactor.

The protein resides in the cytoplasm. It catalyses the reaction 1-(5-phospho-beta-D-ribosyl)-5'-AMP + H2O = 1-(5-phospho-beta-D-ribosyl)-5-[(5-phospho-beta-D-ribosylamino)methylideneamino]imidazole-4-carboxamide. It participates in amino-acid biosynthesis; L-histidine biosynthesis; L-histidine from 5-phospho-alpha-D-ribose 1-diphosphate: step 3/9. In terms of biological role, catalyzes the hydrolysis of the adenine ring of phosphoribosyl-AMP. The sequence is that of Phosphoribosyl-AMP cyclohydrolase from Chromohalobacter salexigens (strain ATCC BAA-138 / DSM 3043 / CIP 106854 / NCIMB 13768 / 1H11).